A 389-amino-acid polypeptide reads, in one-letter code: Cytochrome oxidase assembly protein SHY1 (389 aa).

Over 1–71 the chain is Mitochondrial matrix; that stretch reads MSLLGARSTY…SRRERSFGKK (71 aa). The helical transmembrane segment at 72-92 threads the bilayer; the sequence is IVLGLMFAMPIISFYLGTWQV. Residues 93–341 lie on the Mitochondrial intermembrane side of the membrane; that stretch reads RRLKWKTKLI…KPTIDLKNNH (249 aa). The disordered stretch occupies residues 292-311; that stretch reads GTQAVDNNTSKPRSRQEMPT. The helical transmembrane segment at 342-362 threads the bilayer; the sequence is LQYLVTWYGLSFLSTIFLIVA. The Mitochondrial matrix segment spans residues 363–389; the sequence is LRKAKRGGVVSQDQLMKEKLKHSRKYM.

This sequence belongs to the SURF1 family. As to quaternary structure, interacts with COA1, COX14 and MSS51.

Its subcellular location is the mitochondrion inner membrane. Its function is as follows. Required for efficient assembly of cytochrome c oxidase in the mitochondrial inner membrane. Involved in a step that couples MSS51-COX14-dependent regulation of COX1 translation to early steps of cytochrome c oxidase assembly. The sequence is that of Cytochrome oxidase assembly protein SHY1 (SHY1) from Saccharomyces cerevisiae (strain ATCC 204508 / S288c) (Baker's yeast).